The sequence spans 502 residues: Maturase K (502 aa).

This sequence belongs to the intron maturase 2 family. MatK subfamily.

It localises to the plastid. Its subcellular location is the chloroplast. Usually encoded in the trnK tRNA gene intron. Probably assists in splicing its own and other chloroplast group II introns. The polypeptide is Maturase K (Sisymbrium irio (London rocket)).